Reading from the N-terminus, the 200-residue chain is Holliday junction branch migration complex subunit RuvA (200 aa).

The tract at residues 1–64 is domain I; sequence MIGQLTGLVG…EDAIQLFGFA (64 aa). The tract at residues 65 to 143 is domain II; it reads TTDERDWFRL…KMPGGGGTVS (79 aa). The tract at residues 144–148 is flexible linker; sequence APGIV. The interval 149-200 is domain III; the sequence is SGPSVENDALLALAGLGFRRAEAWPVLSKVLAENENATLDLAIRLSLKDLAR.

The protein belongs to the RuvA family. In terms of assembly, homotetramer. Forms an RuvA(8)-RuvB(12)-Holliday junction (HJ) complex. HJ DNA is sandwiched between 2 RuvA tetramers; dsDNA enters through RuvA and exits via RuvB. An RuvB hexamer assembles on each DNA strand where it exits the tetramer. Each RuvB hexamer is contacted by two RuvA subunits (via domain III) on 2 adjacent RuvB subunits; this complex drives branch migration. In the full resolvosome a probable DNA-RuvA(4)-RuvB(12)-RuvC(2) complex forms which resolves the HJ.

The protein localises to the cytoplasm. In terms of biological role, the RuvA-RuvB-RuvC complex processes Holliday junction (HJ) DNA during genetic recombination and DNA repair, while the RuvA-RuvB complex plays an important role in the rescue of blocked DNA replication forks via replication fork reversal (RFR). RuvA specifically binds to HJ cruciform DNA, conferring on it an open structure. The RuvB hexamer acts as an ATP-dependent pump, pulling dsDNA into and through the RuvAB complex. HJ branch migration allows RuvC to scan DNA until it finds its consensus sequence, where it cleaves and resolves the cruciform DNA. The polypeptide is Holliday junction branch migration complex subunit RuvA (Gluconobacter oxydans (strain 621H) (Gluconobacter suboxydans)).